The chain runs to 179 residues: uncharacterized protein (179 aa).

It localises to the virion. This is an uncharacterized protein from Acanthamoeba polyphaga (Amoeba).